We begin with the raw amino-acid sequence, 332 residues long: MDKSLFYNPQKMLSYDRILNFVIGARGIGKSYAMKVYPINRFIKYGEQFIYVRRYKPELAKVSNYFNDVAQEFPDHELVVKGRRFYIDGKLAGWAIPLSVWQSEKSNAYPNVSTIVFDEFIREKDNSNYIPNEVSALLNLMDTVFRNRERVRCICLSNAVSVVNPYFLFFNLVPDVNKRFNVYDDALIEIPDSLDFSSERRKTRFGRLIDGTEYGEMSLDNQFIGDSHVFIEKRSKDSKFVFSIVYNGFTLGVWVDVNQGLMYVDTAHDPSTKNVYTLTTDDLNENMMLITNYKNNYHLRKLASAFMNGYLRFDNQVIRNIAYELFRKMRIQ.

Positions 1-207 (MDKSLFYNPQ…SERRKTRFGR (207 aa)) are ATPase. 24–31 (GARGIGKS) contributes to the ATP binding site. Residues 233–332 (KRSKDSKFVF…YELFRKMRIQ (100 aa)) are DNA-binding.

Belongs to the phi29likevirus gp16 family. In terms of assembly, homopentamer. Interacts with the packaging RNA (pRNA). Part of a DNA-gp3-gp16 complex.

The catalysed reaction is ATP + H2O = ADP + phosphate + H(+). ATPase required for the genome encapsidation reaction. Part of the active packaging motor via the binding to the packaging RNA (pRNA), itself fixed to the head-tail connector at the unique portal vertex of the prohead. Binds and supercoils the pre-formed, unit-length DNA bound to gp3 to produce an initiation complex for DNA packaging. Provides the energy to actively pump the viral DNA into the prohead. Approximately one molecule of ATP is used in the packaging of 2 bp of viral DNA. ATP hydrolysis results in a conformational change that causes the arginine/lysine finger of one subunit to move into the active site of its neighbor, where it interacts with the negatively charged oxygens on the gamma-phosphate of ATP. After packaging, the ATPase and the pRNA are released from the prohead. This chain is DNA packaging protein (16), found in Bacillus subtilis (Bacteriophage PZA).